A 660-amino-acid polypeptide reads, in one-letter code: Bifunctional polymyxin resistance protein ArnA (660 aa).

The interval 1 to 304 (MKTVVFAYHD…TLGLVQGSRL (304 aa)) is formyltransferase ArnAFT. Position 86 to 88 (86 to 88 (HLI)) interacts with (6R)-10-formyltetrahydrofolate. Residue H104 is the Proton donor; for formyltransferase activity of the active site. (6R)-10-formyltetrahydrofolate contacts are provided by residues R114 and 136–140 (VKRAD). Residues 314-660 (RRTRVLILGV…RTVDLTDKPS (347 aa)) are dehydrogenase ArnADH. NAD(+)-binding positions include D347 and 368–369 (DI). UDP-alpha-D-glucuronate is bound by residues A393, Y398, and 432-433 (TS). E434 functions as the Proton acceptor; for decarboxylase activity in the catalytic mechanism. Residues R460, N492, 526 to 535 (KLIDGGKQKR), and Y613 each bind UDP-alpha-D-glucuronate. Catalysis depends on R619, which acts as the Proton donor; for decarboxylase activity.

In the N-terminal section; belongs to the Fmt family. UDP-L-Ara4N formyltransferase subfamily. This sequence in the C-terminal section; belongs to the NAD(P)-dependent epimerase/dehydratase family. UDP-glucuronic acid decarboxylase subfamily. As to quaternary structure, homohexamer, formed by a dimer of trimers.

The enzyme catalyses UDP-alpha-D-glucuronate + NAD(+) = UDP-beta-L-threo-pentopyranos-4-ulose + CO2 + NADH. It carries out the reaction UDP-4-amino-4-deoxy-beta-L-arabinose + (6R)-10-formyltetrahydrofolate = UDP-4-deoxy-4-formamido-beta-L-arabinose + (6S)-5,6,7,8-tetrahydrofolate + H(+). The protein operates within nucleotide-sugar biosynthesis; UDP-4-deoxy-4-formamido-beta-L-arabinose biosynthesis; UDP-4-deoxy-4-formamido-beta-L-arabinose from UDP-alpha-D-glucuronate: step 1/3. It functions in the pathway nucleotide-sugar biosynthesis; UDP-4-deoxy-4-formamido-beta-L-arabinose biosynthesis; UDP-4-deoxy-4-formamido-beta-L-arabinose from UDP-alpha-D-glucuronate: step 3/3. It participates in bacterial outer membrane biogenesis; lipopolysaccharide biosynthesis. Bifunctional enzyme that catalyzes the oxidative decarboxylation of UDP-glucuronic acid (UDP-GlcUA) to UDP-4-keto-arabinose (UDP-Ara4O) and the addition of a formyl group to UDP-4-amino-4-deoxy-L-arabinose (UDP-L-Ara4N) to form UDP-L-4-formamido-arabinose (UDP-L-Ara4FN). The modified arabinose is attached to lipid A and is required for resistance to polymyxin and cationic antimicrobial peptides. The sequence is that of Bifunctional polymyxin resistance protein ArnA from Escherichia coli O9:H4 (strain HS).